The chain runs to 231 residues: Large ribosomal subunit protein uL1 (231 aa).

The protein belongs to the universal ribosomal protein uL1 family. Part of the 50S ribosomal subunit.

Binds directly to 23S rRNA. The L1 stalk is quite mobile in the ribosome, and is involved in E site tRNA release. In terms of biological role, protein L1 is also a translational repressor protein, it controls the translation of the L11 operon by binding to its mRNA. This Ralstonia pickettii (strain 12J) protein is Large ribosomal subunit protein uL1.